The chain runs to 1350 residues: ABC transporter G family member 45 (1350 aa).

Residues 1 to 23 (MAAAVELTGDGGTTAETRWLSPP) are disordered. The ABC transporter 1 domain occupies 85–357 (AACAHMCTTR…FETMGFKCPS (273 aa)). 118–125 (GAPGSGKT) lines the ATP pocket. The ABC transmembrane type-2 1 domain occupies 434 to 647 (NIFKACFSRE…AQNAVALNEF (214 aa)). 6 helical membrane passes run 453-473 (VHIF…TLFL), 491-511 (ALFM…AMTI), 523-543 (ILAL…LPIS), 557-577 (VIGY…LFAM), 597-617 (MANM…GFVI), and 683-703 (ICVS…IFAL). In terms of domain architecture, ABC transporter 2 spans 749 to 1001 (LVFDHINYFV…NMIKYFEAIP (253 aa)). Position 794–801 (794–801 (GITGAGKT)) interacts with ATP. One can recognise an ABC transmembrane type-2 2 domain in the interval 1074–1288 (AQCMACLWKQ…TVYGLMFSQL (215 aa)). Transmembrane regions (helical) follow at residues 1099–1119 (INTF…GSTI), 1126–1146 (FNIL…NCSI), 1181–1201 (LPYM…MIGF), 1208–1228 (FFWF…YGMM), 1238–1258 (IAAG…GFII), 1269–1289 (WVYW…SQLG), and 1322–1342 (LVTS…FLSI).

The protein belongs to the ABC transporter superfamily. ABCG family. PDR (TC 3.A.1.205) subfamily.

It is found in the membrane. Its function is as follows. May be a general defense protein. This Oryza sativa subsp. japonica (Rice) protein is ABC transporter G family member 45.